A 388-amino-acid chain; its full sequence is MNYQPTPEDRFTFGLWTVGWQGRDPFGDATRRALDPVESVRRLAELGAHGVTFHDDDLIPFGSSDSEREEHVKRFRQALDDTGMKVPMATTNLFTHPVFKDGGFTANDRDVRRYALRKTIRNIDLAVELGAETYVAWGGREGAESGGAKDVRDALDRMKEAFDLLGEYVTSQGYDIRFAIEPKPNEPRGDILLPTVGHALAFIERLERPELYGVNPEVGHEQMAGLNFPHGIAQALWAGKLFHIDLNGQNGIKYDQDLRFGAGDLRAAFWLVDLLESAGYSGPRHFDFKPPRTEDFDGVWASAAGCMRNYLILKERAAAFRADPEVQEALRASRLDELARPTAADGLQALLDDRSAFEEFDVDAAAARGMAFERLDQLAMDHLLGARG.

Catalysis depends on residues His54 and Asp57. Mg(2+)-binding residues include Glu181, Glu217, His220, Asp245, Asp255, Asp257, and Asp287.

The protein belongs to the xylose isomerase family. In terms of assembly, homotetramer. Requires Mg(2+) as cofactor.

Its subcellular location is the cytoplasm. It carries out the reaction alpha-D-xylose = alpha-D-xylulofuranose. In terms of biological role, involved in D-xylose catabolism. The protein is Xylose isomerase (xylA) of Streptomyces rubiginosus.